The chain runs to 267 residues: Triosephosphate isomerase (267 aa).

Residue 12-14 (NWK) participates in substrate binding. The active-site Electrophile is H104. Catalysis depends on E176, which acts as the Proton acceptor. Residues G182, S222, and 243-244 (GG) each bind substrate.

This sequence belongs to the triosephosphate isomerase family. Homodimer.

It is found in the cytoplasm. The enzyme catalyses D-glyceraldehyde 3-phosphate = dihydroxyacetone phosphate. It participates in carbohydrate biosynthesis; gluconeogenesis. Its pathway is carbohydrate degradation; glycolysis; D-glyceraldehyde 3-phosphate from glycerone phosphate: step 1/1. Functionally, involved in the gluconeogenesis. Catalyzes stereospecifically the conversion of dihydroxyacetone phosphate (DHAP) to D-glyceraldehyde-3-phosphate (G3P). In Bifidobacterium longum (strain DJO10A), this protein is Triosephosphate isomerase.